Reading from the N-terminus, the 318-residue chain is Putative fimbrium tip subunit Fim1F (318 aa).

Residues 1–24 (MRFNVVLFMLIVALLGGLSTCSSE) form the signal peptide. Residues 25–50 (VPIGFDTDELSFDMSLVLLTGDMQTK) constitute a propeptide that is removed on maturation.

Belongs to the bacteroidetes fimbrillin superfamily. FimA/Mfa1 family. May be part of the fimbrial tip.

It localises to the fimbrium. Its function is as follows. Putative component of the fimbrium tip. Fimbriae are filamentous appendages on the cell surface that mediate cell adhesion and biofilm formation. The chain is Putative fimbrium tip subunit Fim1F from Parabacteroides distasonis (strain ATCC 8503 / DSM 20701 / CIP 104284 / JCM 5825 / NCTC 11152).